We begin with the raw amino-acid sequence, 358 residues long: 1-deoxy-D-xylulose 5-phosphate reductoisomerase (358 aa).

NADPH contacts are provided by Thr-7, Gly-8, Ser-9, Ile-10, Gly-31, Asn-33, and Asn-114. Lys-115 contributes to the 1-deoxy-D-xylulose 5-phosphate binding site. Glu-116 lines the NADPH pocket. Position 134 (Asp-134) interacts with Mn(2+). Residues Ser-135, Glu-136, Ser-157, and His-180 each contribute to the 1-deoxy-D-xylulose 5-phosphate site. Glu-136 contributes to the Mn(2+) binding site. Position 186 (Gly-186) interacts with NADPH. Ser-193, Asn-198, Lys-199, and Glu-202 together coordinate 1-deoxy-D-xylulose 5-phosphate. Glu-202 contacts Mn(2+).

Belongs to the DXR family. Mg(2+) is required as a cofactor. Mn(2+) serves as cofactor.

It carries out the reaction 2-C-methyl-D-erythritol 4-phosphate + NADP(+) = 1-deoxy-D-xylulose 5-phosphate + NADPH + H(+). The protein operates within isoprenoid biosynthesis; isopentenyl diphosphate biosynthesis via DXP pathway; isopentenyl diphosphate from 1-deoxy-D-xylulose 5-phosphate: step 1/6. Its function is as follows. Catalyzes the NADPH-dependent rearrangement and reduction of 1-deoxy-D-xylulose-5-phosphate (DXP) to 2-C-methyl-D-erythritol 4-phosphate (MEP). The protein is 1-deoxy-D-xylulose 5-phosphate reductoisomerase of Wolinella succinogenes (strain ATCC 29543 / DSM 1740 / CCUG 13145 / JCM 31913 / LMG 7466 / NCTC 11488 / FDC 602W) (Vibrio succinogenes).